The chain runs to 459 residues: Ribulose bisphosphate carboxylase large chain (459 aa).

Substrate contacts are provided by Asn-98 and Thr-148. The active-site Proton acceptor is the Lys-150. Lys-152 provides a ligand contact to substrate. Mg(2+)-binding residues include Lys-176, Asp-178, and Glu-179. Lys-176 carries the post-translational modification N6-carboxylysine. The active-site Proton acceptor is His-268. 3 residues coordinate substrate: Arg-269, His-301, and Ser-353.

This sequence belongs to the RuBisCO large chain family. Type I subfamily. As to quaternary structure, heterohexadecamer of 8 large chains and 8 small chains. Requires Mg(2+) as cofactor.

Its subcellular location is the plastid. The protein resides in the chloroplast. It carries out the reaction 2 (2R)-3-phosphoglycerate + 2 H(+) = D-ribulose 1,5-bisphosphate + CO2 + H2O. The catalysed reaction is D-ribulose 1,5-bisphosphate + O2 = 2-phosphoglycolate + (2R)-3-phosphoglycerate + 2 H(+). In terms of biological role, ruBisCO catalyzes two reactions: the carboxylation of D-ribulose 1,5-bisphosphate, the primary event in carbon dioxide fixation, as well as the oxidative fragmentation of the pentose substrate in the photorespiration process. Both reactions occur simultaneously and in competition at the same active site. This Calyptrosphaera sphaeroidea protein is Ribulose bisphosphate carboxylase large chain (rbcL).